A 128-amino-acid polypeptide reads, in one-letter code: Azurin (128 aa).

One can recognise a Plastocyanin-like domain in the interval 1 to 128 (AECKTTIDST…SMMKGTVTLK (128 aa)). Residues Cys-3 and Cys-26 are joined by a disulfide bond. The Cu cation site is built by His-46, Cys-112, His-117, and Met-121.

The protein resides in the periplasm. Functionally, transfers electrons from cytochrome c551 to cytochrome oxidase. The polypeptide is Azurin (Pseudomonas fluorescens biotype B).